The primary structure comprises 483 residues: Pre-glycoprotein polyprotein GP complex (483 aa).

Residue Gly-2 is the site of N-myristoyl glycine; by host attachment. At 2–17 (GQLVSFIGEIPAIVHE) the chain is on the extracellular side. Residues 18-32 (ALNVALIAVSIIAIM) form a helical membrane-spanning segment. A topological domain (cytoplasmic) is located at residue Lys-33. The chain crosses the membrane as a helical span at residues 34 to 53 (GLINIWKSGLFQLIMFLILA). Extracellular loops occupy residues 54 to 58 (GRSCS) and 59 to 422 (ISIG…SLVD). Cys-57 provides a ligand contact to Zn(2+). Residues Asn-73, Asn-88, Asn-130, and Asn-179 are each glycosylated (N-linked (GlcNAc...) asparagine; by host). Cystine bridges form between Cys-85-Cys-223, Cys-186-Cys-204, Cys-269-Cys-282, Cys-291-Cys-300, and Cys-354-Cys-375. The N-linked (GlcNAc...) asparagine; by host glycan is linked to Asn-216. N-linked (GlcNAc...) asparagine; by host glycosylation is found at Asn-355, Asn-363, Asn-380, and Asn-385. Residues 423–443 (LCFWSTLFYTASIFLHLLHIP) traverse the membrane as a helical segment. The Cytoplasmic portion of the chain corresponds to 444 to 483 (THRHIIGEGCPKPHRLTSDSLCACGFFQLKGRPTRWARIP). Zn(2+) contacts are provided by His-445, His-447, Cys-453, His-457, Cys-465, and Cys-467.

The protein belongs to the arenaviridae GPC protein family. Homotetramer; disulfide-linked. As to quaternary structure, homotetramer. GP2 homotetramers bind through ionic interactions with GP1 homotetramers to form the GP complex together with the stable signal peptide. The GP-C polyprotein interacts with the host protease MBTPS1/SKI-1 resulting in the polyprotein processing. Post-translationally, specific enzymatic cleavages in vivo yield mature proteins. GP-C polyprotein is cleaved in the endoplasmic reticulum by the host protease MBTPS1. Only cleaved glycoprotein is incorporated into virions. In terms of processing, the SSP remains stably associated with the GP complex following cleavage by signal peptidase and plays crucial roles in the trafficking of GP through the secretory pathway. Myristoylation is necessary for GP2-mediated fusion activity.

The protein resides in the virion membrane. The protein localises to the host endoplasmic reticulum membrane. It is found in the host Golgi apparatus membrane. Its subcellular location is the host cell membrane. Class I viral fusion protein that directs fusion of viral and host endosomal membranes, leading to delivery of the nucleocapsid into the cytoplasm. Membrane fusion is mediated by irreversible conformational changes induced upon acidification in the endosome. In terms of biological role, stable signal peptide (SSP): cleaved and functions as a signal peptide. In addition, it is also retained as the third component of the GP complex. The SSP is required for efficient glycoprotein expression, post-translational maturation cleavage of GP1 and GP2, glycoprotein transport to the cell surface plasma membrane, formation of infectious virus particles, and acid pH-dependent glycoprotein-mediated cell fusion. Functionally, interacts with the host receptor. The chain is Pre-glycoprotein polyprotein GP complex from Peromyscus californicus (California mouse).